Consider the following 552-residue polypeptide: Arginine--tRNA ligase (552 aa).

The 'HIGH' region signature appears at 123–133; sequence ANPTGPLTIGR.

This sequence belongs to the class-I aminoacyl-tRNA synthetase family. As to quaternary structure, monomer.

The protein localises to the cytoplasm. The enzyme catalyses tRNA(Arg) + L-arginine + ATP = L-arginyl-tRNA(Arg) + AMP + diphosphate. The protein is Arginine--tRNA ligase of Pelodictyon phaeoclathratiforme (strain DSM 5477 / BU-1).